Consider the following 612-residue polypeptide: UBA domain-containing protein 6 (612 aa).

The UBA domain maps to 3-42 (DLDTKIKTLKNMGVSESDAKDSLERCGYDVESAAEFIFSG). Phosphoserine is present on serine 595.

It localises to the cytoplasm. The protein localises to the nucleus. The chain is UBA domain-containing protein 6 (ucp6) from Schizosaccharomyces pombe (strain 972 / ATCC 24843) (Fission yeast).